We begin with the raw amino-acid sequence, 118 residues long: UPF0102 protein Dtur_1530 (118 aa).

The protein belongs to the UPF0102 family.

The sequence is that of UPF0102 protein Dtur_1530 from Dictyoglomus turgidum (strain DSM 6724 / Z-1310).